The chain runs to 464 residues: MSVEKTNQSWGGRFSEPVDAFVARFTASVDFDKRLYRHDIMGSIAHATMLAKVGVLSDAERDAIVDGLQQIQAEIEAGSFDWRVDLEDVHMNIEARLTDRIGVTGKKLHTGRSRNDQVATDIRLWLRDEIDTILAEITRLQEGLLGLAEAEADTIMPGFTHLQTAQPVTFGHHLLAWFEMLGRDYERLVDCRKRVNRMPLGSAALAGTTYPIQREITCQLLGFDAVGGNSLDGVSDRDFAIEFCAAASLAMMHLSRFSEELVLWTSAQFQFIDLPDRFCTGSSIMPQKKNPDVPELVRGKSGRVFGALTGLLTLMKGQPLAYNKDNQEDKEPLFDAADTLRDSLRAFADMVPAIRPRREIMREAARRGFSTATDLADYLVRKGLPFRDCHEIVGHAVKYGVDSGKDLAEMSLDELRRFSEQIDADVFDVLTLEGSVNARDHIGGTAPNQVRAAVARGRKLLAQR.

Belongs to the lyase 1 family. Argininosuccinate lyase subfamily.

Its subcellular location is the cytoplasm. It carries out the reaction 2-(N(omega)-L-arginino)succinate = fumarate + L-arginine. It functions in the pathway amino-acid biosynthesis; L-arginine biosynthesis; L-arginine from L-ornithine and carbamoyl phosphate: step 3/3. The sequence is that of Argininosuccinate lyase from Pseudomonas aeruginosa (strain ATCC 15692 / DSM 22644 / CIP 104116 / JCM 14847 / LMG 12228 / 1C / PRS 101 / PAO1).